The chain runs to 1838 residues: Type III effector DspE (1838 aa).

Basic and acidic residues predominate over residues 1–12 (MELKSLGTEHKA). Disordered regions lie at residues 1–72 (MELK…AAHQ), 86–163 (KKFS…PTQQ), 182–264 (MAHP…VATP), 281–300 (LEGT…LKGS), 398–418 (DGKS…KTML), and 1480–1505 (NLAA…SNNR). Over residues 27–46 (ALQQGSSSSSPQNAAASLAA) the composition is skewed to low complexity. Residues 91-103 (SAPQGQPGTTHSK) are compositionally biased toward polar residues. Positions 110-120 (LLARDDGETQH) are enriched in basic and acidic residues. Positions 407–418 (GSGTQSHNKTML) are enriched in polar residues. Residues 1480-1502 (NLAAGSRERSTTSGQFGSTTSAS) are compositionally biased toward low complexity.

Belongs to the AvrE family. Interacts with the chaperone DspF (DspB/F).

Its subcellular location is the secreted. It localises to the host cell. Polyamidoamine dendrimers inhibit channel and virulence activities. Functionally, major virulence factor that may function as a water- and solute-permeable channel dedicated to creating osmotic/water potential perturbation and a water- and nutrient-rich apoplast in which bacteria multiply within the infected plant tissues. Expression in Xenopus oocytes results in inward and outward currents, permeability to water and osmolarity-dependent oocyte swelling and bursting. In terms of biological role, acts as a major cell-death inducer during fire blight, a necrotic disease affecting plants of the rosaceous family, and during hypersensitive response (HR) on non-host plants. Essential for pathogenicity on host plants. Contributes quantitatively and in a strain-dependent fashion to HR elicitation in non-host plants such as tobacco. Induces cell death in leaves of apple, a host plant, and tobacco, a non-host plant. Also triggers necrosis in the widely used model, non-host, N.benthamiana and in yeast. Required for the transient multiplication and survival of E.amylovora in non-host A.thaliana leaves. In A.thaliana, triggers electrolyte leakage, activation of defense pathways, reactive oxygen species (ROS) accumulation and cell death. The toxicity of DspE in A.thaliana is associated with an early repression of de novo protein synthesis. The protein is Type III effector DspE of Erwinia amylovora (Fire blight bacteria).